A 470-amino-acid polypeptide reads, in one-letter code: Maturase K (470 aa).

It belongs to the intron maturase 2 family. MatK subfamily.

It localises to the plastid. Its subcellular location is the chloroplast. Usually encoded in the trnK tRNA gene intron. Probably assists in splicing its own and other chloroplast group II introns. The polypeptide is Maturase K (Nypa fruticans (Nypa palm)).